We begin with the raw amino-acid sequence, 380 residues long: Succinyl-diaminopimelate desuccinylase (380 aa).

Residue His69 participates in Zn(2+) binding. Residue Asp71 is part of the active site. Residue Asp102 coordinates Zn(2+). The Proton acceptor role is filled by Glu136. Residues Glu137, Glu165, and His351 each coordinate Zn(2+).

This sequence belongs to the peptidase M20A family. DapE subfamily. Homodimer. Requires Zn(2+) as cofactor. Co(2+) serves as cofactor.

The catalysed reaction is N-succinyl-(2S,6S)-2,6-diaminopimelate + H2O = (2S,6S)-2,6-diaminopimelate + succinate. Its pathway is amino-acid biosynthesis; L-lysine biosynthesis via DAP pathway; LL-2,6-diaminopimelate from (S)-tetrahydrodipicolinate (succinylase route): step 3/3. Its function is as follows. Catalyzes the hydrolysis of N-succinyl-L,L-diaminopimelic acid (SDAP), forming succinate and LL-2,6-diaminopimelate (DAP), an intermediate involved in the bacterial biosynthesis of lysine and meso-diaminopimelic acid, an essential component of bacterial cell walls. In Bordetella petrii (strain ATCC BAA-461 / DSM 12804 / CCUG 43448), this protein is Succinyl-diaminopimelate desuccinylase.